A 360-amino-acid polypeptide reads, in one-letter code: Cysteine proteinase 2 (360 aa).

Residues 1 to 19 (MVPRRLFVLAVVVLADTAA) form the signal peptide. A propeptide spans 20-142 (VVNSGFADSN…NHRMRAAAVA (123 aa)) (activation peptide). N125 carries N-linked (GlcNAc...) asparagine glycosylation. 2 disulfides stabilise this stretch: C164–C207 and C198–C240. C167 is an active-site residue. A glycan (N-linked (GlcNAc...) asparagine) is linked at N256. A disulfide bond links C298 and C348. Catalysis depends on residues H307 and N327.

It belongs to the peptidase C1 family. In terms of tissue distribution, expressed at the onset of germination.

The protein resides in the vacuole. In terms of biological role, involved in the degradation of the storage protein zein. May play a role in proteolysis during emergencies. The polypeptide is Cysteine proteinase 2 (CCP2) (Zea mays (Maize)).